A 517-amino-acid chain; its full sequence is MKRFRIRSVDFRQLVNFFSFMRWECSSSATVWVRFNMTIRIINRQSRFCCKSFLSARLYSSSEQVRDVADVAKNISKVLMSSPQLVLDSALDQSGLRVSQEVVEDVLNRFRNAGLLTYRFFQWSEKQRHYEHSVRAYHMMIESTAKIRQYKLMWDLINAMRKKKMLNVETFCIVMRKYARAQKVDEAIYAFNVMEKYDLPPNLVAFNGLLSALCKSKNVRKAQEVFENMRDRFTPDSKTYSILLEGWGKEPNLPKAREVFREMIDAGCHPDIVTYSIMVDILCKAGRVDEALGIVRSMDPSICKPTTFIYSVLVHTYGTENRLEEAVDTFLEMERSGMKADVAVFNSLIGAFCKANRMKNVYRVLKEMKSKGVTPNSKSCNIILRHLIERGEKDEAFDVFRKMIKVCEPDADTYTMVIKMFCEKKEMETADKVWKYMRKKGVFPSMHTFSVLINGLCEERTTQKACVLLEEMIEMGIRPSGVTFGRLRQLLIKEEREDVLKFLNEKMNVLVNEPLCD.

The N-terminal 59 residues, 1-59 (MKRFRIRSVDFRQLVNFFSFMRWECSSSATVWVRFNMTIRIINRQSRFCCKSFLSARLY), are a transit peptide targeting the mitochondrion. 10 PPR repeats span residues 133–163 (SVRA…MRKK), 167–201 (NVET…DLPP), 202–232 (NLVA…MRDR), 236–270 (DSKT…GCHP), 271–305 (DIVT…ICKP), 306–340 (TTFI…GMKA), 341–375 (DVAV…GVTP), 376–406 (NSKS…MIKV), 410–444 (DADT…GVFP), and 445–479 (SMHT…GIRP).

The protein belongs to the PPR family. P subfamily.

It localises to the mitochondrion. The sequence is that of Pentatricopeptide repeat-containing protein At1g77360, mitochondrial from Arabidopsis thaliana (Mouse-ear cress).